A 348-amino-acid chain; its full sequence is ECA polysaccharide chain length modulation protein (348 aa).

At 1 to 30 (MTQPMPGKPAEDAENELDIRGLFRTLWAGK) the chain is on the cytoplasmic side. Residues 31-51 (LWIIGMGLAFALIALAYTFFA) traverse the membrane as a helical segment. The Periplasmic portion of the chain corresponds to 52-322 (RQEWSSTAIT…EPVKRDSPRR (271 aa)). Residues 323–343 (AFLMIMWGIVGGLIGAGVALT) form a helical membrane-spanning segment. At 344–348 (RRCSK) the chain is on the cytoplasmic side.

This sequence belongs to the WzzB/Cld/Rol family. As to quaternary structure, homooctamer. Probably part of a complex composed of WzxE, WzyE and WzzE.

Its subcellular location is the cell inner membrane. Its pathway is bacterial outer membrane biogenesis; enterobacterial common antigen biosynthesis. Modulates the polysaccharide chain length of enterobacterial common antigen (ECA). In Escherichia coli O157:H7, this protein is ECA polysaccharide chain length modulation protein.